A 176-amino-acid chain; its full sequence is NADH-dependent flavin reductase (176 aa).

FAD contacts are provided by residues 39-46 (EDSVHGMT) and 48-49 (NA). Serine 52 serves as a coordination point for NAD(+). FAD contacts are provided by residues 63-65 (SIS), 69-70 (KM), and 95-96 (HF). Residues histidine 137 and 157–160 (FYTG) contribute to the NAD(+) site.

Belongs to the non-flavoprotein flavin reductase family. As to quaternary structure, homodimer. 4-nitrophenol 2-monooxygenase complex consists of an oxygenase component NphA1 and a flavin reductase component NphA2.

The catalysed reaction is a reduced flavin + NAD(+) = an oxidized flavin + NADH + 2 H(+). Its function is as follows. Catalyzes the reduction of FAD with the concomitant oxidation of NADH. NAD is the physiological electron donor. Subsequently, the reduced flavins diffuse to the oxygenase component NphA2. The chain is NADH-dependent flavin reductase (nphA2) from Rhodococcus sp.